Reading from the N-terminus, the 460-residue chain is TNF receptor-associated factor family protein DDB_G0290883 (460 aa).

An RING-type; degenerate zinc finger spans residues 27 to 67 (CPICFEFIYKKQIYQCKSGHHACKECWEKSLETKKECMTCK). 2 consecutive TRAF-type zinc fingers follow at residues 141–194 (SHLI…KKEL) and 196–253 (THYK…SELQ). An MATH domain is found at 320–448 (GYRNKWIISN…DDKLTIEIYI (129 aa)).

This sequence belongs to the TNF receptor-associated factor family. A subfamily.

Its subcellular location is the cytoplasm. Its function is as follows. Probable adapter protein and signal transducer that links members of the tumor necrosis factor receptor family to different signaling pathways by association with the receptor cytoplasmic domain and kinases. The chain is TNF receptor-associated factor family protein DDB_G0290883 from Dictyostelium discoideum (Social amoeba).